A 485-amino-acid polypeptide reads, in one-letter code: Glutamyl-tRNA(Gln) amidotransferase subunit A (485 aa).

Active-site charge relay system residues include Lys-78 and Ser-153. The active-site Acyl-ester intermediate is the Ser-177.

It belongs to the amidase family. GatA subfamily. Heterotrimer of A, B and C subunits.

The enzyme catalyses L-glutamyl-tRNA(Gln) + L-glutamine + ATP + H2O = L-glutaminyl-tRNA(Gln) + L-glutamate + ADP + phosphate + H(+). Functionally, allows the formation of correctly charged Gln-tRNA(Gln) through the transamidation of misacylated Glu-tRNA(Gln) in organisms which lack glutaminyl-tRNA synthetase. The reaction takes place in the presence of glutamine and ATP through an activated gamma-phospho-Glu-tRNA(Gln). This is Glutamyl-tRNA(Gln) amidotransferase subunit A from Bacillus cereus (strain Q1).